Consider the following 156-residue polypeptide: Small ribosomal subunit protein bS16 (156 aa).

Composition is skewed to low complexity over residues 113-123 and 137-156; these read AESGTTAAATT and EAPAEAAEAPAEAADAASES. The disordered stretch occupies residues 113 to 156; that stretch reads AESGTTAAATTPKKKKAPKKDEAAEAPAEAAEAPAEAADAASES.

This sequence belongs to the bacterial ribosomal protein bS16 family.

The protein is Small ribosomal subunit protein bS16 of Mycolicibacterium smegmatis (strain ATCC 700084 / mc(2)155) (Mycobacterium smegmatis).